A 207-amino-acid polypeptide reads, in one-letter code: Protein FMP32, mitochondrial (207 aa).

Residues 100-136 (ADRSEFHNIQNEYESVKNDLEKLRNKLREEITKTNAG) are a coiled coil. Residues 184–206 (VMQWLIGVCTGTFALVLAYMRLL) traverse the membrane as a helical segment.

Belongs to the CCDC90 family.

It localises to the mitochondrion. The protein localises to the membrane. The chain is Protein FMP32, mitochondrial (FMP32) from Saccharomyces cerevisiae (strain ATCC 204508 / S288c) (Baker's yeast).